The chain runs to 419 residues: UDP-N-acetylglucosamine 1-carboxyvinyltransferase 2 (419 aa).

Residue 22–23 participates in phosphoenolpyruvate binding; it reads KN. Arg-92 provides a ligand contact to UDP-N-acetyl-alpha-D-glucosamine. Residue Asp-116 is the Proton donor of the active site. UDP-N-acetyl-alpha-D-glucosamine contacts are provided by residues 121-125, Asp-306, and Leu-328; that span reads RPIDQ.

The protein belongs to the EPSP synthase family. MurA subfamily.

Its subcellular location is the cytoplasm. The enzyme catalyses phosphoenolpyruvate + UDP-N-acetyl-alpha-D-glucosamine = UDP-N-acetyl-3-O-(1-carboxyvinyl)-alpha-D-glucosamine + phosphate. Its pathway is cell wall biogenesis; peptidoglycan biosynthesis. Cell wall formation. Adds enolpyruvyl to UDP-N-acetylglucosamine. The protein is UDP-N-acetylglucosamine 1-carboxyvinyltransferase 2 of Latilactobacillus sakei subsp. sakei (strain 23K) (Lactobacillus sakei subsp. sakei).